Reading from the N-terminus, the 328-residue chain is Helicase VP6-A (328 aa).

2 disordered regions span residues 31–128 (DWTE…TGAN) and 180–237 (VAEQ…SVGI). 3 stretches are compositionally biased toward basic and acidic residues: residues 36 to 61 (ETNKESKAERKEGDKAEELKDGEGRN), 71 to 83 (AKETKDARCDRRI), and 96 to 109 (PGERANENVDRGDG). Residue Lys-110 participates in ATP binding. The segment covering 110–128 (KVGGGGGDADAGVGTTGAN) has biased composition (gly residues). Composition is skewed to basic and acidic residues over residues 180–205 (VAEQTERLRDLRRKEKSGAHAKAAER) and 214–230 (PHGDAQREGPEEEKTSE).

Belongs to the orbivirus VP6 family. Homohexamer.

It localises to the virion. The enzyme catalyses ATP + H2O = ADP + phosphate + H(+). ATP dependent RNA helicase essential for RNA packaging and viral transcription. Possesses ss- and dsRNA-binding capacity. This Bluetongue virus 1 (isolate South Africa) (BTV 1) protein is Helicase VP6-A (Segment-9).